We begin with the raw amino-acid sequence, 115 residues long: Alpha-endosulfine (115 aa).

Polar residues predominate over residues 1-10 (MSSENLSDTQ). The disordered stretch occupies residues 1–27 (MSSENLSDTQMEYEDEKQDSQEKNANL). Ser-65 is modified (phosphoserine; by GWL). The disordered stretch occupies residues 77–115 (NKQLPVAGPDKNLVTGDHIPTPQDLPQRRSSLVTSKLAG). Residues 104–115 (RRSSLVTSKLAG) show a composition bias toward polar residues.

This sequence belongs to the endosulfine family. In terms of processing, phosphorylation at Ser-65 by gwl during mitosis is essential for interaction with ppp2r2d (PR55-delta) and subsequent inactivation of PP2A.

The protein resides in the cytoplasm. Protein phosphatase inhibitor that specifically inhibits protein phosphatase 2A (PP2A) during mitosis. When phosphorylated at Ser-67 during mitosis, specifically interacts with ppp2r2d (PR55-delta) and inhibits its activity, leading to inactivation of PP2A, an essential condition to keep cyclin-B1-CDK1 activity high during M phase. This chain is Alpha-endosulfine (ensa), found in Salmo salar (Atlantic salmon).